The primary structure comprises 36 residues: U14-ctenitoxin-Co1b (36 aa).

In terms of tissue distribution, expressed by the venom gland.

It is found in the secreted. In terms of biological role, not toxic to mice by intracerebroventricular injection. The chain is U14-ctenitoxin-Co1b from Ctenus ornatus (Brazilian spider).